Reading from the N-terminus, the 401-residue chain is Putative hetero-Diels-Alderase asR5 (401 aa).

A signal peptide spans 1-21 (MRRSFLISAALGLSMSTPALA). N-linked (GlcNAc...) asparagine glycans are attached at residues Asn-71, Asn-77, Asn-240, and Asn-334.

This sequence belongs to the eupF Diels-Alderase family.

Its pathway is secondary metabolite biosynthesis; terpenoid biosynthesis. Putative hetero-Diels-Alderase; part of the gene cluster that mediates the biosynthesis of xenovulene A, an unusual meroterpenoid that has potent inhibitory effects on the human gamma-aminobutyrate A (GABAA) benzodiazepine receptor. The first step of xenovulene A biosynthesis is the biosynthesis of 3-methylorcinaldehyde performed by the non-reducing polyketide synthase aspks1. The salicylate hydroxylase asL1 then catalyzes the oxidative dearomatization of 3-methylorcinaldehyde to yield a dearomatized hydroxycyclohexadione. The 2-oxoglutarate-dependent dioxygenase asL3 further catalyzes the oxidative ring expansion to provide the first tropolone metabolite. The cytochrome P450 monooxygenase asR2 allows the synthesis of tropolone hemiacetal. In parallel, a previously unrecognised class of terpene cyclase, asR6, produces alpha-humulene from farnesylpyrophosphate (FPP). The putative Diels-Alderase asR5 probably catalyzes the formation of the tropolone-humulene skeleton by linking humulene and the polyketide moiety. Oxidative-ring contractions catalyzed by asL4 and asL6 then processively remove carbon atoms from the polyketide to yield xenovulene A. The chain is Putative hetero-Diels-Alderase asR5 from Sarocladium schorii (Acremonium strictum (strain IMI 501407)).